The sequence spans 954 residues: Isoleucine--tRNA ligase (954 aa).

Residues 58 to 68 (PYANGDIHIGH) carry the 'HIGH' region motif. L-isoleucyl-5'-AMP is bound at residue E572. The 'KMSKS' region motif lies at 613-617 (KMSKS). K616 contacts ATP. The Zn(2+) site is built by C917, C920, C937, and C940.

It belongs to the class-I aminoacyl-tRNA synthetase family. IleS type 1 subfamily. As to quaternary structure, monomer. Zn(2+) serves as cofactor.

It is found in the cytoplasm. It catalyses the reaction tRNA(Ile) + L-isoleucine + ATP = L-isoleucyl-tRNA(Ile) + AMP + diphosphate. Functionally, catalyzes the attachment of isoleucine to tRNA(Ile). As IleRS can inadvertently accommodate and process structurally similar amino acids such as valine, to avoid such errors it has two additional distinct tRNA(Ile)-dependent editing activities. One activity is designated as 'pretransfer' editing and involves the hydrolysis of activated Val-AMP. The other activity is designated 'posttransfer' editing and involves deacylation of mischarged Val-tRNA(Ile). The polypeptide is Isoleucine--tRNA ligase (Photobacterium profundum (strain SS9)).